Here is a 180-residue protein sequence, read N- to C-terminus: Large ribosomal subunit protein uL5 (180 aa).

Belongs to the universal ribosomal protein uL5 family. In terms of assembly, part of the 50S ribosomal subunit; part of the 5S rRNA/L5/L18/L25 subcomplex. Contacts the 5S rRNA and the P site tRNA. Forms a bridge to the 30S subunit in the 70S ribosome.

In terms of biological role, this is one of the proteins that bind and probably mediate the attachment of the 5S RNA into the large ribosomal subunit, where it forms part of the central protuberance. In the 70S ribosome it contacts protein S13 of the 30S subunit (bridge B1b), connecting the 2 subunits; this bridge is implicated in subunit movement. Contacts the P site tRNA; the 5S rRNA and some of its associated proteins might help stabilize positioning of ribosome-bound tRNAs. The chain is Large ribosomal subunit protein uL5 from Oenococcus oeni (strain ATCC BAA-331 / PSU-1).